The chain runs to 209 residues: B3 domain-containing protein At2g31420 (209 aa).

Positions 101–198 (LSKLEKSDFL…KLCFALSSPT (98 aa)) form a DNA-binding region, TF-B3.

The protein localises to the nucleus. The chain is B3 domain-containing protein At2g31420 from Arabidopsis thaliana (Mouse-ear cress).